A 201-amino-acid polypeptide reads, in one-letter code: dTTP/UTP pyrophosphatase (201 aa).

The Proton acceptor role is filled by Asp75.

This sequence belongs to the Maf family. YhdE subfamily. It depends on a divalent metal cation as a cofactor.

It is found in the cytoplasm. It catalyses the reaction dTTP + H2O = dTMP + diphosphate + H(+). The enzyme catalyses UTP + H2O = UMP + diphosphate + H(+). In terms of biological role, nucleoside triphosphate pyrophosphatase that hydrolyzes dTTP and UTP. May have a dual role in cell division arrest and in preventing the incorporation of modified nucleotides into cellular nucleic acids. In Pseudomonas fluorescens (strain ATCC BAA-477 / NRRL B-23932 / Pf-5), this protein is dTTP/UTP pyrophosphatase.